Reading from the N-terminus, the 323-residue chain is tRNA-cytidine(32) 2-sulfurtransferase (323 aa).

The PP-loop motif signature appears at 49–54 (SGGKDS). [4Fe-4S] cluster-binding residues include Cys-124, Cys-127, and Cys-215.

The protein belongs to the TtcA family. Homodimer. Requires Mg(2+) as cofactor. [4Fe-4S] cluster serves as cofactor.

The protein resides in the cytoplasm. The enzyme catalyses cytidine(32) in tRNA + S-sulfanyl-L-cysteinyl-[cysteine desulfurase] + AH2 + ATP = 2-thiocytidine(32) in tRNA + L-cysteinyl-[cysteine desulfurase] + A + AMP + diphosphate + H(+). It participates in tRNA modification. Catalyzes the ATP-dependent 2-thiolation of cytidine in position 32 of tRNA, to form 2-thiocytidine (s(2)C32). The sulfur atoms are provided by the cysteine/cysteine desulfurase (IscS) system. This chain is tRNA-cytidine(32) 2-sulfurtransferase, found in Shewanella denitrificans (strain OS217 / ATCC BAA-1090 / DSM 15013).